An 807-amino-acid polypeptide reads, in one-letter code: Putative histidine biosynthesis bifunctional protein HisCD (807 aa).

The interval 1-440 (MTDHFDTLIR…ALNIAGQGVN (440 aa)) is histidinol dehydrogenase. Positions 261 and 264 each coordinate Zn(2+). Active-site residues include Glu-328 and His-329. 2 residues coordinate Zn(2+): Asp-362 and His-421. The interval 441-807 (MNNIFDANLL…VNEQPKEIAN (367 aa)) is histidinol-phosphate aminotransferase. Lys-655 carries the N6-(pyridoxal phosphate)lysine modification.

The protein in the N-terminal section; belongs to the histidinol dehydrogenase family. It in the C-terminal section; belongs to the class-II pyridoxal-phosphate-dependent aminotransferase family. Histidinol-phosphate aminotransferase subfamily. Homodimer. It depends on Zn(2+) as a cofactor. Pyridoxal 5'-phosphate serves as cofactor.

It carries out the reaction L-histidinol phosphate + 2-oxoglutarate = 3-(imidazol-4-yl)-2-oxopropyl phosphate + L-glutamate. It catalyses the reaction L-histidinol + 2 NAD(+) + H2O = L-histidine + 2 NADH + 3 H(+). It participates in amino-acid biosynthesis; L-histidine biosynthesis; L-histidine from 5-phospho-alpha-D-ribose 1-diphosphate: step 7/9. It functions in the pathway amino-acid biosynthesis; L-histidine biosynthesis; L-histidine from 5-phospho-alpha-D-ribose 1-diphosphate: step 9/9. In terms of biological role, catalyzes the sequential NAD-dependent oxidations of L-histidinol to L-histidinaldehyde and then to L-histidine. This chain is Putative histidine biosynthesis bifunctional protein HisCD (hisCD), found in Photorhabdus laumondii subsp. laumondii (strain DSM 15139 / CIP 105565 / TT01) (Photorhabdus luminescens subsp. laumondii).